Consider the following 311-residue polypeptide: Ribosomal RNA small subunit methyltransferase A (311 aa).

The S-adenosyl-L-methionine site is built by Asn-29, Val-31, Gly-56, Glu-77, Asp-107, and Asn-126.

The protein belongs to the class I-like SAM-binding methyltransferase superfamily. rRNA adenine N(6)-methyltransferase family. RsmA subfamily.

It is found in the cytoplasm. The enzyme catalyses adenosine(1518)/adenosine(1519) in 16S rRNA + 4 S-adenosyl-L-methionine = N(6)-dimethyladenosine(1518)/N(6)-dimethyladenosine(1519) in 16S rRNA + 4 S-adenosyl-L-homocysteine + 4 H(+). Functionally, specifically dimethylates two adjacent adenosines (A1518 and A1519) in the loop of a conserved hairpin near the 3'-end of 16S rRNA in the 30S particle. May play a critical role in biogenesis of 30S subunits. The polypeptide is Ribosomal RNA small subunit methyltransferase A (Mycolicibacterium vanbaalenii (strain DSM 7251 / JCM 13017 / BCRC 16820 / KCTC 9966 / NRRL B-24157 / PYR-1) (Mycobacterium vanbaalenii)).